Here is a 139-residue protein sequence, read N- to C-terminus: D-ribose pyranase (139 aa).

His-20 functions as the Proton donor in the catalytic mechanism. Residues Asp-28, His-106, and 128 to 130 (YAN) contribute to the substrate site.

Belongs to the RbsD / FucU family. RbsD subfamily. Homodecamer.

The protein localises to the cytoplasm. It catalyses the reaction beta-D-ribopyranose = beta-D-ribofuranose. Its pathway is carbohydrate metabolism; D-ribose degradation; D-ribose 5-phosphate from beta-D-ribopyranose: step 1/2. Functionally, catalyzes the interconversion of beta-pyran and beta-furan forms of D-ribose. The chain is D-ribose pyranase from Glaesserella parasuis serovar 5 (strain SH0165) (Haemophilus parasuis).